The chain runs to 404 residues: Argininosuccinate synthase (404 aa).

Residue 9-17 (AYSGGLDTS) participates in ATP binding. Tyrosine 86 contributes to the L-citrulline binding site. Glycine 116 provides a ligand contact to ATP. Residues threonine 118, asparagine 122, and aspartate 123 each contribute to the L-aspartate site. Asparagine 122 is a binding site for L-citrulline. The L-citrulline site is built by arginine 126, serine 174, serine 183, glutamate 259, and tyrosine 271.

The protein belongs to the argininosuccinate synthase family. Type 1 subfamily. As to quaternary structure, homotetramer.

The protein resides in the cytoplasm. The catalysed reaction is L-citrulline + L-aspartate + ATP = 2-(N(omega)-L-arginino)succinate + AMP + diphosphate + H(+). It participates in amino-acid biosynthesis; L-arginine biosynthesis; L-arginine from L-ornithine and carbamoyl phosphate: step 2/3. In Listeria monocytogenes serotype 4b (strain CLIP80459), this protein is Argininosuccinate synthase.